A 305-amino-acid chain; its full sequence is PI protein (305 aa).

This sequence belongs to the initiator RepB protein family. Homodimer.

Initiation for plasmid R6K DNA replication. The chain is PI protein (pir) from Escherichia coli.